We begin with the raw amino-acid sequence, 210 residues long: LexA repressor (210 aa).

The H-T-H motif DNA-binding region spans 31 to 51 (RVEISKELGFRSPNAAEEHLK). Residues S126 and K163 each act as for autocatalytic cleavage activity in the active site.

It belongs to the peptidase S24 family. As to quaternary structure, homodimer.

It carries out the reaction Hydrolysis of Ala-|-Gly bond in repressor LexA.. Represses a number of genes involved in the response to DNA damage (SOS response), including recA and lexA. In the presence of single-stranded DNA, RecA interacts with LexA causing an autocatalytic cleavage which disrupts the DNA-binding part of LexA, leading to derepression of the SOS regulon and eventually DNA repair. This chain is LexA repressor, found in Histophilus somni (strain 129Pt) (Haemophilus somnus).